The primary structure comprises 415 residues: Interleukin-5 receptor subunit alpha (415 aa).

The first 17 residues, 1-17, serve as a signal peptide directing secretion; it reads MVPVLLILVGALATLQA. Residues 18-339 lie on the Extracellular side of the membrane; sequence DLLNHKKFLL…KERKSLVEWH (322 aa). The Fibronectin type-III 1 domain occupies 29–120; the sequence is PPVNFTIKAT…VSAELKAPPG (92 aa). Residues Asn-32 and Asn-128 are each glycosylated (N-linked (GlcNAc...) asparagine). Disulfide bonds link Cys-131-Cys-152 and Cys-179-Cys-193. 2 N-linked (GlcNAc...) asparagine glycosylation sites follow: Asn-213 and Asn-241. The 94-residue stretch at 238–331 folds into the Fibronectin type-III 2 domain; the sequence is PPRNVTVEIE…WSQPIYVGKE (94 aa). The cysteines at positions 266 and 313 are disulfide-linked. Positions 319 to 323 match the WSXWS motif motif; that stretch reads WGEWS. Residues 340–361 traverse the membrane as a helical segment; sequence LIVLPTAACFVLLIFSLICRVC. Residues 362–415 lie on the Cytoplasmic side of the membrane; sequence HLWTRLFPPVPAPKSNIKDLPVVTEYEKPSNETKIEVVHCVEEVGFEVMGNSTF. A Box 1 motif motif is present at residues 367-375; sequence LFPPVPAPK.

Interacts with IL5. Interacts with CSF2RB. Interacts with JAK2. Interacts with SDCBP. Expressed on eosinophils and basophils. Also on B-cells.

The protein resides in the membrane. Functionally, cell surface receptor that plays an important role in the survival, differentiation, and chemotaxis of eosinophils. Acts by forming a heterodimeric receptor with CSF2RB subunit and subsequently binding to interleukin-5. In unstimulated conditions, interacts constitutively with JAK2. Heterodimeric receptor activation leads to JAK2 stimulation and subsequent activation of the JAK-STAT pathway. The chain is Interleukin-5 receptor subunit alpha (Il5ra) from Mus musculus (Mouse).